The sequence spans 617 residues: Erythritol-mannosyl-transferase 1 (617 aa).

Disordered regions lie at residues 365 to 396 and 567 to 617; these read RNPG…IDSR and RQRK…VTNP. The span at 371-381 shows a compositional bias: polar residues; it reads GFTSPLNSPTA. Over residues 386 to 396 the composition is skewed to basic and acidic residues; that stretch reads KWDEKRPIDSR. Polar residues predominate over residues 578–603; sequence TAKTSLSVDTTEVATPTFTDTETSLS.

The protein belongs to the UDP-glycosyltransferase family.

It participates in secondary metabolite biosynthesis. Glycosyltransferase; part of the gene cluster that mediates the biosynthesis of mannosylerythritol lipids (MELs), surface-active substances that enhance the availability of water-insoluble substrates. Depending on the number of acetyl groups, mannosylerythritol lipids can be differentiated into MEL A (fully acetylated), MEL B and MEL C (monoacetylated at R-6 and R-4, respectively), and the fully deacetylated MEL D. The first step in the pathway is the generation of mannosylerythritol by the glycosyltransferase EMT1 which catalyzes the transfer of GDP-mannose to the C-4 atom of meso-erythritol. This reaction has to be stereospecific, since only mannosyl-D-erythritol is generated. The produced disaccharide is subsequently acylated with fatty acids of various lengths by the acyltransferases MAC1 and MAC2 at positions C-2 and C-3, repectively. The existence of MEL derivatives which carry an acetyl group at C-2 implies that at least MAC1 also accepts acetyl-CoA as a donor. The final step of MEL biosynthesis is the acetylation of the fully acylated mannosylerythritol lipids catalyzed by the acetyl-CoA-dependent acetyltransferase MAT1. MAT1 displays a relaxed regioselectivity and is able to transfer acetylgroups to both positions C-4 and C-6 of the mannosyl moiety. This is Erythritol-mannosyl-transferase 1 from Pseudozyma antarctica (strain T-34) (Yeast).